Consider the following 503-residue polypeptide: Maturase K (503 aa).

The protein belongs to the intron maturase 2 family. MatK subfamily.

Its subcellular location is the plastid. The protein resides in the chloroplast. Functionally, usually encoded in the trnK tRNA gene intron. Probably assists in splicing its own and other chloroplast group II introns. The protein is Maturase K of Purshia tridentata (Antelope bitterbrush).